The chain runs to 364 residues: RNA polymerase II holoenzyme cyclin-like subunit (364 aa).

Residues 53–143 enclose the Cyclin N-terminal domain; it reads QQINRLSKRI…VGECEFSLIS (91 aa). Residues 268 to 303 form a disordered region; it reads PGFGSQGSQQQAGFSQGNSQGSLQGDSAAAEPKKVT. A compositionally biased stretch (low complexity) spans 273-289; it reads QGSQQQAGFSQGNSQGS.

Belongs to the cyclin family. Cyclin C subfamily. Component of the SRB8-11 complex, a regulatory module of the Mediator complex.

It localises to the nucleus. In terms of biological role, component of the SRB8-11 complex. The SRB8-11 complex is a regulatory module of the Mediator complex which is itself involved in regulation of basal and activated RNA polymerase II-dependent transcription. The SRB8-11 complex may be involved in the transcriptional repression of a subset of genes regulated by Mediator. It may inhibit the association of the Mediator complex with RNA polymerase II to form the holoenzyme complex. The SRB8-11 complex phosphorylates the C-terminal domain (CTD) of the largest subunit of RNA polymerase II. The protein is RNA polymerase II holoenzyme cyclin-like subunit (SSN8) of Chaetomium globosum (strain ATCC 6205 / CBS 148.51 / DSM 1962 / NBRC 6347 / NRRL 1970) (Soil fungus).